The chain runs to 443 residues: GTPase Der (443 aa).

EngA-type G domains are found at residues proline 3 to lysine 167 and isoleucine 176 to glutamine 349. Residues glycine 9–serine 16, aspartate 56–leucine 60, asparagine 119–aspartate 122, glycine 182–serine 189, aspartate 229–isoleucine 233, and asparagine 294–aspartate 297 each bind GTP. Residues glutamine 350–proline 434 enclose the KH-like domain.

It belongs to the TRAFAC class TrmE-Era-EngA-EngB-Septin-like GTPase superfamily. EngA (Der) GTPase family. In terms of assembly, associates with the 50S ribosomal subunit.

Its function is as follows. GTPase that plays an essential role in the late steps of ribosome biogenesis. The protein is GTPase Der of Coxiella burnetii (strain CbuG_Q212) (Coxiella burnetii (strain Q212)).